The following is a 406-amino-acid chain: Tryptophan synthase beta chain (406 aa).

K99 carries the N6-(pyridoxal phosphate)lysine modification.

The protein belongs to the TrpB family. Tetramer of two alpha and two beta chains. Pyridoxal 5'-phosphate serves as cofactor.

The enzyme catalyses (1S,2R)-1-C-(indol-3-yl)glycerol 3-phosphate + L-serine = D-glyceraldehyde 3-phosphate + L-tryptophan + H2O. It participates in amino-acid biosynthesis; L-tryptophan biosynthesis; L-tryptophan from chorismate: step 5/5. Its function is as follows. The beta subunit is responsible for the synthesis of L-tryptophan from indole and L-serine. The protein is Tryptophan synthase beta chain of Rhizobium etli (strain CIAT 652).